Here is a 183-residue protein sequence, read N- to C-terminus: UPF0114 protein HI_0507 (183 aa).

3 consecutive transmembrane segments (helical) span residues 30 to 50 (LQVP…YKFI), 68 to 88 (IMLG…LVMV), and 150 to 170 (TMMW…ALAY).

The protein belongs to the UPF0114 family.

Its subcellular location is the cell membrane. The sequence is that of UPF0114 protein HI_0507 from Haemophilus influenzae (strain ATCC 51907 / DSM 11121 / KW20 / Rd).